The chain runs to 28 residues: N-acetyl-D-galactosamine-binding lectin subunit A (28 aa).

Belongs to the ribosome-inactivating protein family. In terms of assembly, disulfide-linked heterodimer of A and B chains.

It catalyses the reaction Endohydrolysis of the N-glycosidic bond at one specific adenosine on the 28S rRNA.. In terms of biological role, gal / GalNAc-specific lectin. Agglutinates both native and trypsin-treated rabbit erythrocytes but not human erythrocytes irrespective of blood group type. In Iris hollandica (Dutch iris), this protein is N-acetyl-D-galactosamine-binding lectin subunit A.